The chain runs to 196 residues: Imidazoleglycerol-phosphate dehydratase (196 aa).

It belongs to the imidazoleglycerol-phosphate dehydratase family.

The protein resides in the cytoplasm. The enzyme catalyses D-erythro-1-(imidazol-4-yl)glycerol 3-phosphate = 3-(imidazol-4-yl)-2-oxopropyl phosphate + H2O. The protein operates within amino-acid biosynthesis; L-histidine biosynthesis; L-histidine from 5-phospho-alpha-D-ribose 1-diphosphate: step 6/9. This is Imidazoleglycerol-phosphate dehydratase from Clostridium novyi (strain NT).